The chain runs to 425 residues: Histone-binding protein RBBP7 (425 aa).

Residue A2 is modified to N-acetylalanine. Residue S3 is modified to Phosphoserine. K4 carries the post-translational modification N6-acetyllysine; alternate. Residue K4 forms a Glycyl lysine isopeptide (Lys-Gly) (interchain with G-Cter in SUMO2); alternate linkage. A Glycyl lysine isopeptide (Lys-Gly) (interchain with G-Cter in ubiquitin); alternate cross-link involves residue K4. Position 10 is a phosphothreonine (T10). WD repeat units lie at residues 47 to 122, 128 to 173, 181 to 217, 228 to 269, 275 to 312, 318 to 369, and 376 to 403; these read QWLP…KINH, RARY…LRLR, GLSW…KIVD, VVED…HLVD, VNCL…LHTF, EIFQ…LFIH, and ISDF…IWQM. S95 carries the phosphoserine modification. Residue K101 forms a Glycyl lysine isopeptide (Lys-Gly) (interchain with G-Cter in SUMO2) linkage. N6-acetyllysine is present on K119. K155 is covalently cross-linked (Glycyl lysine isopeptide (Lys-Gly) (interchain with G-Cter in SUMO2)). An N6-acetyllysine; alternate modification is found at K159. Residue K159 forms a Glycyl lysine isopeptide (Lys-Gly) (interchain with G-Cter in SUMO2); alternate linkage. Phosphoserine is present on S354.

It belongs to the WD repeat RBAP46/RBAP48/MSI1 family. Binds directly to helix 1 of the histone fold of histone H4, a region that is not accessible when H4 is in chromatin. Subunit of the type B histone acetyltransferase (HAT) complex, composed of RBBP7 and HAT1. Subunit of the core histone deacetylase (HDAC) complex, which is composed of HDAC1, HDAC2, RBBP4 and RBBP7. The core HDAC complex associates with SIN3A, ARID4B/SAP180, SAP18, SAP30, SAP130, SUDS3/SAP45 and possibly ARID4A/RBP1 and ING1 to form the SIN3 HDAC complex. Component of the nucleosome remodeling and deacetylase (NuRD) repressor complex, composed of core proteins MTA1, MTA2, MTA3, RBBP4, RBBP7, HDAC1, HDAC2, MBD2, MBD3, and peripherally associated proteins CDK2AP1, CDK2AP2, GATAD2A, GATAD2B, CHD3, CHD4 and CHD5. The exact stoichiometry of the NuRD complex is unknown, and some subunits such as MBD2 and MBD3, GATAD2A and GATAD2B, and CHD3, CHD4 and CHD5 define mutually exclusive NuRD complexes. The NuRD complex may interact with MBD3L1. The NuRD complex may interact with MBD3L2. Subunit of the PRC2/EED-EZH2 complex, which is composed of at least EED, EZH2, RBBP4, RBBP7 and SUZ12. The PRC2/EED-EZH2 complex may also associate with HDAC1. Component of the NURF-1 ISWI chromatin remodeling complex (also called the nucleosome-remodeling factor (NURF) complex) at least composed of SMARCA1, BPTF, RBBP4 and RBBP7. Within the complex interacts with SMARCA1. Component of the BPFT-SMARCA1 complex at least composed of SMARCA1, BPFT, RBBP4 and RBBP7; the complex is catalytically inactive and does not remodel chromatin. Within the complex interacts with SMARCA1. Interacts with BRCA1. Interacts with CDK2AP1. Interacts with CENPA. Interacts with CHD3. Interacts with CHD4. Interacts with CREBBP, and this interaction may be enhanced by the binding of phosphorylated CREB1 to CREBBP. Interacts with HDAC7. Interacts with MTA1. Interacts with PWWP2B. Interacts with RB1 (via viral protein-binding domain). Interacts with SUV39H1.

The protein resides in the nucleus. In terms of biological role, core histone-binding subunit that may target chromatin remodeling factors, histone acetyltransferases and histone deacetylases to their histone substrates in a manner that is regulated by nucleosomal DNA. Component of several complexes which regulate chromatin metabolism. These include the type B histone acetyltransferase (HAT) complex, which is required for chromatin assembly following DNA replication; the core histone deacetylase (HDAC) complex, which promotes histone deacetylation and consequent transcriptional repression; the nucleosome remodeling and histone deacetylase complex (the NuRD complex), which promotes transcriptional repression by histone deacetylation and nucleosome remodeling; and the PRC2/EED-EZH2 complex, which promotes repression of homeotic genes during development; and the NURF (nucleosome remodeling factor) complex. This Bos taurus (Bovine) protein is Histone-binding protein RBBP7 (RBBP7).